The chain runs to 384 residues: DNA replication and repair protein RecF (384 aa).

ATP is bound at residue 43–50 (GENGSGKT).

Belongs to the RecF family.

It is found in the cytoplasm. Its function is as follows. The RecF protein is involved in DNA metabolism; it is required for DNA replication and normal SOS inducibility. RecF binds preferentially to single-stranded, linear DNA. It also seems to bind ATP. This chain is DNA replication and repair protein RecF, found in Brucella abortus (strain 2308).